The chain runs to 528 residues: Putative B3 domain-containing protein REM15 (528 aa).

2 consecutive DNA-binding regions (TF-B3) follow at residues 3-95 (HQHF…LGPS) and 135-231 (CFVA…LPNE). The segment at 234 to 253 (EEANEVSLPEEPESDAERNL) is disordered. 2 DNA-binding regions (TF-B3) span residues 279-376 (CFVA…IPNE) and 425-522 (QSSL…FCSK).

It is found in the nucleus. The polypeptide is Putative B3 domain-containing protein REM15 (REM15.15) (Arabidopsis thaliana (Mouse-ear cress)).